The chain runs to 967 residues: Importin-alpha re-exporter (967 aa).

Residues 20-95 (AEEALKVWEL…KREIINLMLK (76 aa)) enclose the Importin N-terminal domain.

Belongs to the XPO2/CSE1 family. As to quaternary structure, binds with high affinity to importin-alpha only in the presence of RanGTP.

Its subcellular location is the cytoplasm. It localises to the nucleus envelope. In terms of biological role, export receptor for importin alpha. Mediates importin-alpha re-export from the nucleus to the cytoplasm after import substrates have been released into the nucleoplasm. The protein is Importin-alpha re-exporter (kap109) of Schizosaccharomyces pombe (strain 972 / ATCC 24843) (Fission yeast).